The chain runs to 61 residues: Small ribosomal subunit protein uS14B (61 aa).

Zn(2+) is bound by residues C24, C27, C40, and C43.

The protein belongs to the universal ribosomal protein uS14 family. Zinc-binding uS14 subfamily. Part of the 30S ribosomal subunit. Contacts proteins S3 and S10. The cofactor is Zn(2+).

Its function is as follows. Binds 16S rRNA, required for the assembly of 30S particles and may also be responsible for determining the conformation of the 16S rRNA at the A site. In Salinispora arenicola (strain CNS-205), this protein is Small ribosomal subunit protein uS14B.